Here is a 257-residue protein sequence, read N- to C-terminus: Enolase-phosphatase E1 (257 aa).

Mg(2+)-binding residues include aspartate 16 and glutamate 18. Residues 150–151 (SS) and lysine 184 contribute to the substrate site. Aspartate 209 provides a ligand contact to Mg(2+).

The protein belongs to the HAD-like hydrolase superfamily. MasA/MtnC family. In terms of assembly, monomer. Mg(2+) is required as a cofactor.

The protein localises to the cytoplasm. It is found in the nucleus. The enzyme catalyses 5-methylsulfanyl-2,3-dioxopentyl phosphate + H2O = 1,2-dihydroxy-5-(methylsulfanyl)pent-1-en-3-one + phosphate. It functions in the pathway amino-acid biosynthesis; L-methionine biosynthesis via salvage pathway; L-methionine from S-methyl-5-thio-alpha-D-ribose 1-phosphate: step 3/6. Its pathway is amino-acid biosynthesis; L-methionine biosynthesis via salvage pathway; L-methionine from S-methyl-5-thio-alpha-D-ribose 1-phosphate: step 4/6. In terms of biological role, bifunctional enzyme that catalyzes the enolization of 2,3-diketo-5-methylthiopentyl-1-phosphate (DK-MTP-1-P) into the intermediate 2-hydroxy-3-keto-5-methylthiopentenyl-1-phosphate (HK-MTPenyl-1-P), which is then dephosphorylated to form the acireductone 1,2-dihydroxy-3-keto-5-methylthiopentene (DHK-MTPene). This is Enolase-phosphatase E1 (Enoph1) from Mus musculus (Mouse).